We begin with the raw amino-acid sequence, 295 residues long: Lipoyl synthase (295 aa).

[4Fe-4S] cluster-binding residues include cysteine 34, cysteine 39, cysteine 45, cysteine 60, cysteine 64, cysteine 67, and serine 273. Positions 46 to 262 (WNKRHATIMV…KRMAYAKGFS (217 aa)) constitute a Radical SAM core domain.

It belongs to the radical SAM superfamily. Lipoyl synthase family. [4Fe-4S] cluster serves as cofactor.

The protein resides in the cytoplasm. The catalysed reaction is [[Fe-S] cluster scaffold protein carrying a second [4Fe-4S](2+) cluster] + N(6)-octanoyl-L-lysyl-[protein] + 2 oxidized [2Fe-2S]-[ferredoxin] + 2 S-adenosyl-L-methionine + 4 H(+) = [[Fe-S] cluster scaffold protein] + N(6)-[(R)-dihydrolipoyl]-L-lysyl-[protein] + 4 Fe(3+) + 2 hydrogen sulfide + 2 5'-deoxyadenosine + 2 L-methionine + 2 reduced [2Fe-2S]-[ferredoxin]. It participates in protein modification; protein lipoylation via endogenous pathway; protein N(6)-(lipoyl)lysine from octanoyl-[acyl-carrier-protein]: step 2/2. Catalyzes the radical-mediated insertion of two sulfur atoms into the C-6 and C-8 positions of the octanoyl moiety bound to the lipoyl domains of lipoate-dependent enzymes, thereby converting the octanoylated domains into lipoylated derivatives. This chain is Lipoyl synthase, found in Anaplasma phagocytophilum (strain HZ).